The chain runs to 322 residues: HPr kinase/phosphorylase (322 aa).

Residues histidine 146 and lysine 167 contribute to the active site. 161-168 is a binding site for ATP; that stretch reads GDSGLGKS. A Mg(2+)-binding site is contributed by serine 168. The Proton acceptor; for phosphorylation activity. Proton donor; for dephosphorylation activity role is filled by aspartate 185. Residues 209-218 are important for the catalytic mechanism of both phosphorylation and dephosphorylation; that stretch reads LEVRGLGLLD. Glutamate 210 contacts Mg(2+). Residue arginine 250 is part of the active site. The important for the catalytic mechanism of dephosphorylation stretch occupies residues 271-276; the sequence is QVAAGR.

It belongs to the HPrK/P family. As to quaternary structure, homohexamer. Mg(2+) is required as a cofactor.

The enzyme catalyses [HPr protein]-L-serine + ATP = [HPr protein]-O-phospho-L-serine + ADP + H(+). The catalysed reaction is [HPr protein]-O-phospho-L-serine + phosphate + H(+) = [HPr protein]-L-serine + diphosphate. In terms of biological role, catalyzes the ATP- as well as the pyrophosphate-dependent phosphorylation of a specific serine residue in HPr, a phosphocarrier protein of the phosphoenolpyruvate-dependent sugar phosphotransferase system (PTS). HprK/P also catalyzes the pyrophosphate-producing, inorganic phosphate-dependent dephosphorylation (phosphorolysis) of seryl-phosphorylated HPr (P-Ser-HPr). In Paraburkholderia phymatum (strain DSM 17167 / CIP 108236 / LMG 21445 / STM815) (Burkholderia phymatum), this protein is HPr kinase/phosphorylase.